A 237-amino-acid polypeptide reads, in one-letter code: Methylosome subunit pICln (237 aa).

The residue at position 2 (Ser-2) is an N-acetylserine. 4 positions are modified to phosphoserine: Ser-102, Ser-144, Ser-193, and Ser-195. Position 223 is a phosphothreonine (Thr-223).

This sequence belongs to the pICln (TC 1.A.47) family. As to quaternary structure, component of the methylosome, a 20S complex containing at least PRMT5/SKB1, WDR77/MEP50 and CLNS1A/pICln. May mediate SNRPD1 and SNRPD3 methylation. Forms a 6S pICln-Sm complex composed of CLNS1A/pICln, SNRPD1, SNRPD2, SNRPE, SNRPF and SNRPG; ring-like structure where CLNS1A/pICln mimics additional Sm proteins and which is unable to assemble into the core snRNP. Interacts with LSM10 and LSM11.

The protein resides in the cytoplasm. It localises to the cytosol. It is found in the nucleus. The protein localises to the cytoskeleton. Involved in both the assembly of spliceosomal snRNPs and the methylation of Sm proteins. Chaperone that regulates the assembly of spliceosomal U1, U2, U4 and U5 small nuclear ribonucleoproteins (snRNPs), the building blocks of the spliceosome, and thereby plays an important role in the splicing of cellular pre-mRNAs. Most spliceosomal snRNPs contain a common set of Sm proteins SNRPB, SNRPD1, SNRPD2, SNRPD3, SNRPE, SNRPF and SNRPG that assemble in a heptameric protein ring on the Sm site of the small nuclear RNA to form the core snRNP (Sm core). In the cytosol, the Sm proteins SNRPD1, SNRPD2, SNRPE, SNRPF and SNRPG are trapped in an inactive 6S pICln-Sm complex by the chaperone CLNS1A that controls the assembly of the core snRNP. Dissociation by the SMN complex of CLNS1A from the trapped Sm proteins and their transfer to an SMN-Sm complex triggers the assembly of core snRNPs and their transport to the nucleus. This Pongo abelii (Sumatran orangutan) protein is Methylosome subunit pICln (CLNS1A).